A 582-amino-acid chain; its full sequence is Arginine--tRNA ligase (582 aa).

The short motif at 128–138 (PNLAKEMHVGH) is the 'HIGH' region element.

The protein belongs to the class-I aminoacyl-tRNA synthetase family. In terms of assembly, monomer.

Its subcellular location is the cytoplasm. It catalyses the reaction tRNA(Arg) + L-arginine + ATP = L-arginyl-tRNA(Arg) + AMP + diphosphate. This Colwellia psychrerythraea (strain 34H / ATCC BAA-681) (Vibrio psychroerythus) protein is Arginine--tRNA ligase.